The sequence spans 243 residues: Adenosylcobinamide-GDP ribazoletransferase (243 aa).

Transmembrane regions (helical) follow at residues 31–51 (LLFYPLVGVVFGMLLLGFSAL), 57–77 (LMLHAALVLSAWVLLSGGLHL), 109–129 (IAVVTLVLVLLLKFAAILALI), 135–155 (IGLLLAPVIGRAAMLGLFLGT), and 188–208 (VLLAGWSGVAVLLVCAVCFFW).

The protein belongs to the CobS family. The cofactor is Mg(2+).

The protein localises to the cell inner membrane. The catalysed reaction is alpha-ribazole + adenosylcob(III)inamide-GDP = adenosylcob(III)alamin + GMP + H(+). It carries out the reaction alpha-ribazole 5'-phosphate + adenosylcob(III)inamide-GDP = adenosylcob(III)alamin 5'-phosphate + GMP + H(+). It participates in cofactor biosynthesis; adenosylcobalamin biosynthesis; adenosylcobalamin from cob(II)yrinate a,c-diamide: step 7/7. Joins adenosylcobinamide-GDP and alpha-ribazole to generate adenosylcobalamin (Ado-cobalamin). Also synthesizes adenosylcobalamin 5'-phosphate from adenosylcobinamide-GDP and alpha-ribazole 5'-phosphate. This is Adenosylcobinamide-GDP ribazoletransferase from Pseudomonas savastanoi pv. phaseolicola (strain 1448A / Race 6) (Pseudomonas syringae pv. phaseolicola (strain 1448A / Race 6)).